Here is a 174-residue protein sequence, read N- to C-terminus: Adenine phosphoribosyltransferase (174 aa).

This sequence belongs to the purine/pyrimidine phosphoribosyltransferase family. Homodimer.

The protein resides in the cytoplasm. It carries out the reaction AMP + diphosphate = 5-phospho-alpha-D-ribose 1-diphosphate + adenine. The protein operates within purine metabolism; AMP biosynthesis via salvage pathway; AMP from adenine: step 1/1. Catalyzes a salvage reaction resulting in the formation of AMP, that is energically less costly than de novo synthesis. In Dichelobacter nodosus (strain VCS1703A), this protein is Adenine phosphoribosyltransferase.